The sequence spans 158 residues: MNKQRGTYSEVSLAQDPKRQQRKLKGNKISISGTKQEIFQVELNLQNASSDHQGNDKTYHCKGLLPPPEKLTAEVLGIICIVLMATVLKTIVLIPCIGVLEQNNFSLNRRMQKARHCGHCPEEWITYSNSCYYIGKERRTWEERVCWPVLRRTLICFL.

The span at 1-12 (MNKQRGTYSEVS) shows a compositional bias: polar residues. Residues 1-25 (MNKQRGTYSEVSLAQDPKRQQRKLK) are disordered. Over 1-74 (MNKQRGTYSE…LPPPEKLTAE (74 aa)) the chain is Cytoplasmic. The chain crosses the membrane as a helical; Signal-anchor for type II membrane protein span at residues 75-95 (VLGIICIVLMATVLKTIVLIP). Topologically, residues 96–158 (CIGVLEQNNF…VLRRTLICFL (63 aa)) are extracellular.

Can form disulfide-bonded heterodimer with CD94. In terms of tissue distribution, natural killer cells.

It is found in the membrane. Its function is as follows. May play a role as a receptor for the recognition of MHC class I HLA-E molecules by NK cells. The polypeptide is NKG2-F type II integral membrane protein (KLRC4) (Homo sapiens (Human)).